The primary structure comprises 660 residues: Rhamnogalacturonate lyase B (660 aa).

Positions 1–18 are cleaved as a signal peptide; the sequence is MRLGVCFSLAAAASVARA. 4 N-linked (GlcNAc...) asparagine glycosylation sites follow: N25, N109, N142, and N284. The segment at 446-466 is disordered; the sequence is RLGTPDKSSGEFRHGAARDPT. Residues 453–466 are compositionally biased toward basic and acidic residues; the sequence is SSGEFRHGAARDPT. N524, N566, and N635 each carry an N-linked (GlcNAc...) asparagine glycan.

Belongs to the polysaccharide lyase 4 family.

It localises to the secreted. The enzyme catalyses Endotype eliminative cleavage of L-alpha-rhamnopyranosyl-(1-&gt;4)-alpha-D-galactopyranosyluronic acid bonds of rhamnogalacturonan I domains in ramified hairy regions of pectin leaving L-rhamnopyranose at the reducing end and 4-deoxy-4,5-unsaturated D-galactopyranosyluronic acid at the non-reducing end.. Pectinolytic enzymes consist of four classes of enzymes: pectin lyase, polygalacturonase, pectin methylesterase and rhamnogalacturonase. Degrades the rhamnogalacturonan I (RG-I) backbone of pectin. Active against linseed rhamnogalacturonan. The polypeptide is Rhamnogalacturonate lyase B (rglB) (Emericella nidulans (strain FGSC A4 / ATCC 38163 / CBS 112.46 / NRRL 194 / M139) (Aspergillus nidulans)).